The chain runs to 378 residues: Acetylornithine deacetylase (378 aa).

Zn(2+) is bound at residue histidine 76. Residue aspartate 78 is part of the active site. Aspartate 108 contacts Zn(2+). The active site involves glutamate 140. Positions 141, 165, and 351 each coordinate Zn(2+).

This sequence belongs to the peptidase M20A family. ArgE subfamily. Homodimer. It depends on Zn(2+) as a cofactor. Co(2+) serves as cofactor. Requires glutathione as cofactor.

Its subcellular location is the cytoplasm. The enzyme catalyses N(2)-acetyl-L-ornithine + H2O = L-ornithine + acetate. It participates in amino-acid biosynthesis; L-arginine biosynthesis; L-ornithine from N(2)-acetyl-L-ornithine (linear): step 1/1. Catalyzes the hydrolysis of the amide bond of N(2)-acetylated L-amino acids. Cleaves the acetyl group from N-acetyl-L-ornithine to form L-ornithine, an intermediate in L-arginine biosynthesis pathway, and a branchpoint in the synthesis of polyamines. This Vibrio vulnificus (strain CMCP6) protein is Acetylornithine deacetylase.